Consider the following 507-residue polypeptide: Histidine ammonia-lyase (507 aa).

Positions 143-145 (SSG) form a cross-link, 5-imidazolinone (Ser-Gly). The residue at position 144 (S144) is a 2,3-didehydroalanine (Ser).

Belongs to the PAL/histidase family. In terms of processing, contains an active site 4-methylidene-imidazol-5-one (MIO), which is formed autocatalytically by cyclization and dehydration of residues Ser-Ser-Gly.

It localises to the cytoplasm. It catalyses the reaction L-histidine = trans-urocanate + NH4(+). It participates in amino-acid degradation; L-histidine degradation into L-glutamate; N-formimidoyl-L-glutamate from L-histidine: step 1/3. The polypeptide is Histidine ammonia-lyase (Alkaliphilus metalliredigens (strain QYMF)).